Consider the following 489-residue polypeptide: Mitochondrial-processing peptidase subunit beta (489 aa).

A mitochondrion-targeting transit peptide spans 1–45 (MAAAAARVVLLPAARRRLWGFSESLLIRGAAGRSSYFGENRLRST). A Zn(2+)-binding site is contributed by His101. The active-site Proton acceptor is Glu104. Residues His105 and Glu181 each contribute to the Zn(2+) site.

It belongs to the peptidase M16 family. As to quaternary structure, heterodimer of PMPCA (alpha) and PMPCB (beta) subunits, forming the mitochondrial processing protease (MPP) in which PMPCA is involved in substrate recognition and binding and PMPCB is the catalytic subunit. Requires Zn(2+) as cofactor.

It localises to the mitochondrion matrix. The enzyme catalyses Release of N-terminal transit peptides from precursor proteins imported into the mitochondrion, typically with Arg in position P2.. With respect to regulation, binding to PMPCA is required for catalytic activity. Catalytic subunit of the essential mitochondrial processing protease (MPP), which cleaves the mitochondrial sequence off newly imported precursors proteins. Preferentially, cleaves after an arginine at position P2. Required for PINK1 turnover by coupling PINK1 mitochondrial import and cleavage, which results in subsequent PINK1 proteolysis. The polypeptide is Mitochondrial-processing peptidase subunit beta (PMPCB) (Pongo abelii (Sumatran orangutan)).